A 538-amino-acid polypeptide reads, in one-letter code: RNA-binding protein RO60 (538 aa).

Residues 16 to 369 (VPNSEGCYVW…SFKLVEPTGK (354 aa)) enclose the TROVE domain. Residues 120–284 (RIPTHLFTFI…DMPLTALLRN (165 aa)) form an RNA-binding region. The VWFA-like domain stretch occupies residues 361–538 (FKLVEPTGKR…VIRNFTLDLI (178 aa)). A divalent metal cation contacts are provided by S378, S380, and T445.

Belongs to the Ro 60 kDa family.

The protein resides in the cytoplasm. RNA-binding protein that binds to misfolded non-coding RNAs, pre-5S rRNA, and several small cytoplasmic RNA molecules known as Y RNAs. May play roles in cilia formation and/or maintenance. The protein is RNA-binding protein RO60 of Xenopus laevis (African clawed frog).